The primary structure comprises 288 residues: Cyclin-dependent kinase 2 homolog (288 aa).

Residues 4–284 enclose the Protein kinase domain; the sequence is YHGLEKIGEG…AKQAIEHPYF (281 aa). Residues 10–18 and K32 contribute to the ATP site; that span reads IGEGTYGVV. T14 carries the post-translational modification Phosphothreonine. Y15 bears the Phosphotyrosine mark. D125 (proton acceptor) is an active-site residue. The residue at position 158 (T158) is a Phosphothreonine.

This sequence belongs to the protein kinase superfamily. CMGC Ser/Thr protein kinase family. CDC2/CDKX subfamily. May form a complex composed of at least the catalytic subunit CRK2 and a cyclin. Mg(2+) serves as cofactor.

Its subcellular location is the cytoplasm. The enzyme catalyses L-seryl-[protein] + ATP = O-phospho-L-seryl-[protein] + ADP + H(+). It catalyses the reaction L-threonyl-[protein] + ATP = O-phospho-L-threonyl-[protein] + ADP + H(+). It carries out the reaction [DNA-directed RNA polymerase] + ATP = phospho-[DNA-directed RNA polymerase] + ADP + H(+). Phosphorylation at Thr-14 or Tyr-15 inactivates the enzyme, while phosphorylation at Thr-158 activates it. Its function is as follows. Serine/threonine-protein kinase. Involved in the control of the cell cycle. Required for entry into S-phase and mitosis. Probable component of the kinase complex that phosphorylates the repetitive C-terminus of RNA polymerase II. This is Cyclin-dependent kinase 2 homolog from Plasmodium chabaudi chabaudi.